The primary structure comprises 438 residues: Glutamyl-tRNA reductase (438 aa).

Residues 49–52 (TCNR), Ser-109, 114–116 (EGQ), and Gln-120 each bind substrate. Cys-50 serves as the catalytic Nucleophile. Residue 198 to 203 (GAGRMS) participates in NADP(+) binding.

The protein belongs to the glutamyl-tRNA reductase family. Homodimer.

The enzyme catalyses (S)-4-amino-5-oxopentanoate + tRNA(Glu) + NADP(+) = L-glutamyl-tRNA(Glu) + NADPH + H(+). It functions in the pathway porphyrin-containing compound metabolism; protoporphyrin-IX biosynthesis; 5-aminolevulinate from L-glutamyl-tRNA(Glu): step 1/2. It participates in porphyrin-containing compound metabolism; chlorophyll biosynthesis. Catalyzes the NADPH-dependent reduction of glutamyl-tRNA(Glu) to glutamate 1-semialdehyde (GSA). The polypeptide is Glutamyl-tRNA reductase (Synechococcus sp. (strain WH7803)).